We begin with the raw amino-acid sequence, 381 residues long: NF-kappa-B inhibitor-like protein 1 (381 aa).

Positions 1–32 are disordered; it reads MSNPSPQAPEEEASTSVCRPQSSMASVSRRHR. The segment covering 14-26 has biased composition (polar residues); it reads STSVCRPQSSMAS. 2 ANK repeats span residues 64 to 93 and 97 to 133; these read GQPPPLHRACARHDAPALCLLLRLGADPAH and HGDTALHAAARQGPNAYTDFFLPLLSRCPSAMGIKNK. Disordered stretches follow at residues 129–166, 186–242, and 257–294; these read GIKNKDGETPGQILGWGPPWDSAEEEEDEEVSKEREWR, DDAS…QEEE, and LCESRARRAQEAQGDRGPAPPRARPRAEHPRGAGRGSL. S150 carries the post-translational modification Phosphoserine. The span at 150–159 shows a compositional bias: acidic residues; it reads SAEEEEDEEV. 2 stretches are compositionally biased toward basic and acidic residues: residues 204 to 228 and 257 to 270; these read RLAREHAQKQRRQQLEAEGSRRPPR and LCESRARRAQEAQG.

As to quaternary structure, interacts with CACTIN (via N-terminal domain); the interaction occurs in a pro-inflammatory-independent manner.

It is found in the nucleus. In terms of biological role, involved in the regulation of innate immune response. Acts as negative regulator of Toll-like receptor and interferon-regulatory factor (IRF) signaling pathways. Contributes to the negative regulation of transcriptional activation of NF-kappa-B target genes in response to endogenous pro-inflammatory stimuli. The sequence is that of NF-kappa-B inhibitor-like protein 1 (Nfkbil1) from Rattus norvegicus (Rat).